A 200-amino-acid chain; its full sequence is Mediator of RNA polymerase II transcription subunit 22 (200 aa).

The stretch at 93 to 122 forms a coiled coil; that stretch reads SVNEAIDQRNQQLRALQEECDRKLITLRDE. Positions 169-200 are disordered; sequence PLLASPETGAGPLQSAAPVHSHGGGPGPTEHT. The span at 190–200 shows a compositional bias: gly residues; that stretch reads HGGGPGPTEHT.

Belongs to the Mediator complex subunit 22 family. In terms of assembly, component of the Mediator complex, which is composed of MED1, MED4, MED6, MED7, MED8, MED9, MED10, MED11, MED12, MED13, MED13L, MED14, MED15, MED16, MED17, MED18, MED19, MED20, MED21, MED22, MED23, MED24, MED25, MED26, MED27, MED29, MED30, MED31, CCNC, CDK8 and CDC2L6/CDK11. The MED12, MED13, CCNC and CDK8 subunits form a distinct module termed the CDK8 module. Mediator containing the CDK8 module is less active than Mediator lacking this module in supporting transcriptional activation. Individual preparations of the Mediator complex lacking one or more distinct subunits have been variously termed ARC, CRSP, DRIP, PC2, SMCC and TRAP.

The protein localises to the nucleus. Component of the Mediator complex, a coactivator involved in the regulated transcription of nearly all RNA polymerase II-dependent genes. Mediator functions as a bridge to convey information from gene-specific regulatory proteins to the basal RNA polymerase II transcription machinery. Mediator is recruited to promoters by direct interactions with regulatory proteins and serves as a scaffold for the assembly of a functional preinitiation complex with RNA polymerase II and the general transcription factors. This chain is Mediator of RNA polymerase II transcription subunit 22 (Med22), found in Mus musculus (Mouse).